Here is a 447-residue protein sequence, read N- to C-terminus: Tryptophan 5-hydroxylase 1 (447 aa).

Positions 22–97 (TLIFSLENEV…TVLSVDSPDQ (76 aa)) constitute an ACT domain. Residue S61 is modified to Phosphoserine; by PKA. Y238, R260, and T268 together coordinate L-tryptophan. Fe cation-binding residues include H275, H280, and E320. L-tryptophan is bound by residues S339 and I369.

This sequence belongs to the biopterin-dependent aromatic amino acid hydroxylase family. In terms of assembly, homotetramer. Interacts with DNAJC12. It depends on Fe(2+) as a cofactor. In terms of processing, ubiquitinated, leading to its degradation by the proteasome. Ubiquitinated is triggered by phosphorylation. Post-translationally, phosphorylated; triggering degradation by the proteasome.

The enzyme catalyses (6R)-L-erythro-5,6,7,8-tetrahydrobiopterin + L-tryptophan + O2 = 5-hydroxy-L-tryptophan + (4aS,6R)-4a-hydroxy-L-erythro-5,6,7,8-tetrahydrobiopterin. The protein operates within aromatic compound metabolism; serotonin biosynthesis; serotonin from L-tryptophan: step 1/2. Oxidizes L-tryptophan to 5-hydroxy-l-tryptophan in the rate-determining step of serotonin biosynthesis. In Mus musculus (Mouse), this protein is Tryptophan 5-hydroxylase 1.